The sequence spans 507 residues: MVTIRADEISNIIRERIEQYNREVKIVNTGTVLQVGDGIARIYGLDEVMAGELVEFEEGTIGIALNLESNNVGVVLMGDGLMIQEGSSVKATGKIAQIPVSEAYLGRVINALAKPIDGRGAISSSESRLIESPAPGIISRRSVYEPLQTGLIAIDSMIPIGRGQRELIIGDRQTGKTAVATDTILNQQGQNVICVYVAIGQKASSVAQVVNALQERGAMEYTIVVAETADSPATLQYLAPYTGAALAEYFMYRERHTLIIYDDLSKQAQAYRQMSLLLRRPPGREAYPGDVFYLHSRLLERAAKPSSSLGEGSMTALPIVETQSGDVSAYIPTNVISITDGQIFLSADLFNAGIRPAINVGISVSRVGSAAQIKAMKQVAGKLKLELAQFAELEAFAQFASDLDKATQNQLARGQRLRELLKQSQAAPFTVAEQIMTIYTGTNGYLDSLEIGQVRKFLVELRTYLKTSKTQFQEIISSTKTFTEEAEALLKEAIQEQMERFLLQEQV.

Residue 170-177 participates in ATP binding; that stretch reads GDRQTGKT.

The protein belongs to the ATPase alpha/beta chains family. As to quaternary structure, F-type ATPases have 2 components, CF(1) - the catalytic core - and CF(0) - the membrane proton channel. CF(1) has five subunits: alpha(3), beta(3), gamma(1), delta(1), epsilon(1). CF(0) has four main subunits: a, b, b' and c.

It localises to the plastid. The protein resides in the chloroplast thylakoid membrane. The catalysed reaction is ATP + H2O + 4 H(+)(in) = ADP + phosphate + 5 H(+)(out). Produces ATP from ADP in the presence of a proton gradient across the membrane. The alpha chain is a regulatory subunit. This is ATP synthase subunit alpha, chloroplastic from Populus alba (White poplar).